A 321-amino-acid polypeptide reads, in one-letter code: Cytochrome c biogenesis protein CcsA (321 aa).

The next 7 helical transmembrane spans lie at 9–29 (ILTH…LITL), 44–64 (GMIA…VSSG), 68–88 (LSNL…LHTI), 143–163 (MLLS…LLII), 225–245 (VISL…VWAN), 259–273 (TWAF…IYLH), and 288–308 (VASI…LLGI).

It belongs to the CcmF/CycK/Ccl1/NrfE/CcsA family. In terms of assembly, may interact with Ccs1.

It localises to the plastid. Its subcellular location is the chloroplast thylakoid membrane. Functionally, required during biogenesis of c-type cytochromes (cytochrome c6 and cytochrome f) at the step of heme attachment. This chain is Cytochrome c biogenesis protein CcsA, found in Saccharum hybrid (Sugarcane).